The sequence spans 200 residues: Putative 3-methyladenine DNA glycosylase (200 aa).

Belongs to the DNA glycosylase MPG family.

The sequence is that of Putative 3-methyladenine DNA glycosylase from Shouchella clausii (strain KSM-K16) (Alkalihalobacillus clausii).